The primary structure comprises 310 residues: TLC domain-containing protein 2 (310 aa).

A run of 6 helical transmembrane segments spans residues 6-26, 40-60, 79-99, 117-137, 167-187, and 194-214; these read LLVA…LQLL, NIFV…VGLW, VLVA…LWNQ, CLST…SLLL, ASLA…SLWL, and LSLA…SISI. In terms of domain architecture, TLC spans 33-227; sequence RDRWMWRNIF…IRILTKDILQ (195 aa).

Belongs to the TLCD family.

It is found in the cell membrane. Functionally, regulates the composition and fluidity of the plasma membrane. Inhibits the incorporation of membrane-fluidizing phospholipids containing omega-3 long-chain polyunsaturated fatty acids (LCPUFA) and thereby promotes membrane rigidity. Does not appear to have any effect on LCPUFA synthesis. The sequence is that of TLC domain-containing protein 2 (Tlcd2) from Mus musculus (Mouse).